A 152-amino-acid polypeptide reads, in one-letter code: Synaptobrevin (152 aa).

Residues M1–D16 show a composition bias toward polar residues. The segment at M1–Y30 is disordered. Over M1–K110 the chain is Cytoplasmic. The v-SNARE coiled-coil homology domain maps to K47–A107. The chain crosses the membrane as a helical; Anchor for type IV membrane protein span at residues M111–V130. Residues W131–H152 lie on the Vesicular side of the membrane. The segment at S133–H152 is disordered.

This sequence belongs to the synaptobrevin family. Part of the SNARE core complex containing Snap25 and syntaxin. Ubiquitinated by gzl, regulating endocytic trafficking. In wing imaginal disks, ubiquitination by gzl promotes transcytosis of wingless (wg) to the basolateral surface. Not nervous system-specific; abundant in cells of the gut and Malpighian tubules.

It is found in the cytoplasmic vesicle. The protein localises to the secretory vesicle. It localises to the synaptic vesicle membrane. The protein resides in the cell membrane. In terms of biological role, involved in the targeting and/or fusion of transport vesicles to their target membrane. This Drosophila melanogaster (Fruit fly) protein is Synaptobrevin.